The following is a 548-amino-acid chain: Esterase-5A (548 aa).

Positions 1-21 (MHLVRWLICLIQLWVQLGAAG) are cleaved as a signal peptide. Residues Cys-87 and Cys-106 are joined by a disulfide bond. 2 N-linked (GlcNAc...) asparagine glycosylation sites follow: Asn-95 and Asn-116. Catalysis depends on Ser-210, which acts as the Acyl-ester intermediate. Cys-262 and Cys-274 are oxidised to a cystine. A glycan (N-linked (GlcNAc...) asparagine) is linked at Asn-479. A disulfide bridge connects residues Cys-518 and Cys-539.

It belongs to the type-B carboxylesterase/lipase family.

It localises to the secreted. It carries out the reaction a carboxylic ester + H2O = an alcohol + a carboxylate + H(+). The sequence is that of Esterase-5A (Est-5A) from Drosophila pseudoobscura pseudoobscura (Fruit fly).